The primary structure comprises 537 residues: Fucosyltransferase 6 (537 aa).

The Cytoplasmic segment spans residues methionine 1–lysine 20. A helical; Signal-anchor for type II membrane protein transmembrane segment spans residues isoleucine 21–serine 41. The Lumenal portion of the chain corresponds to asparagine 42 to leucine 537. Asparagine 54, asparagine 231, and asparagine 378 each carry an N-linked (GlcNAc...) asparagine glycan.

This sequence belongs to the glycosyltransferase 37 family. As to expression, expressed in roots and flowers.

It is found in the golgi apparatus. The protein resides in the golgi stack membrane. Its pathway is protein modification; protein glycosylation. May be involved in cell wall biosynthesis. May act as a fucosyltransferase. In Arabidopsis thaliana (Mouse-ear cress), this protein is Fucosyltransferase 6 (FUT6).